We begin with the raw amino-acid sequence, 323 residues long: tRNA N6-adenosine threonylcarbamoyltransferase (323 aa).

Fe cation is bound by residues His110 and His114. Residues Val131–Gly135, Asp164, Gly177, and Asn264 contribute to the substrate site. Asp288 is a Fe cation binding site.

It belongs to the KAE1 / TsaD family. Requires Fe(2+) as cofactor.

Its subcellular location is the cytoplasm. The catalysed reaction is L-threonylcarbamoyladenylate + adenosine(37) in tRNA = N(6)-L-threonylcarbamoyladenosine(37) in tRNA + AMP + H(+). Functionally, required for the formation of a threonylcarbamoyl group on adenosine at position 37 (t(6)A37) in tRNAs that read codons beginning with adenine. Is involved in the transfer of the threonylcarbamoyl moiety of threonylcarbamoyl-AMP (TC-AMP) to the N6 group of A37, together with TsaE and TsaB. TsaD likely plays a direct catalytic role in this reaction. The sequence is that of tRNA N6-adenosine threonylcarbamoyltransferase from Thermus thermophilus (strain ATCC BAA-163 / DSM 7039 / HB27).